We begin with the raw amino-acid sequence, 404 residues long: Keratin, type I cuticular Ha3-II (404 aa).

The interval 1–56 (MPYNFCLPSLSCRTSCSSRPCVPPSCHGYTLPGACNIPANVSNCNWFCEGSFNGSE) is head. The 312-residue stretch at 56–367 (EKETMQFLND…SLLESEDCKL (312 aa)) folds into the IF rod domain. Residues 57 to 91 (KETMQFLNDRLASYLEKVRQLERDNAELENLIRER) form a coil 1A region. The interval 92–102 (SQQQEPLLCPS) is linker 1. Positions 103–203 (YQSYFKTIEE…HEQEVNTLRC (101 aa)) are coil 1B. Residues 204–219 (QLGDRLNVEVDAAPAV) form a linker 12 region. Residues 220-363 (DLNQVLNETR…NTYRSLLESE (144 aa)) are coil 2. The tract at residues 364-404 (DCKLPSNPCATTNACEKPIGSCVTNPCGPRSRCGPCNTFGY) is tail.

This sequence belongs to the intermediate filament family.

In Homo sapiens (Human), this protein is Keratin, type I cuticular Ha3-II (KRT33B).